The sequence spans 1579 residues: MAP kinase kinase kinase SSK2 (1579 aa).

A disordered region spans residues 1 to 70 (MSHSDYFNYK…HSTQYFRSPN (70 aa)). A compositionally biased stretch (low complexity) spans 21-44 (SSKMRQSSSSSSSRLRSESLGRNS). Residues 45–67 (NTTQARVASSPISPGLHSTQYFR) are compositionally biased toward polar residues. Phosphoserine occurs at positions 57, 62, 78, and 118. Disordered regions lie at residues 97–155 (FFHQ…ESEI) and 190–243 (SIMS…GSTT). The span at 104–118 (SGSSSSSARSSRRPS) shows a compositional bias: low complexity. Positions 127–139 (NPQQSLPKLSTQP) are enriched in polar residues. Residues 144–155 (KKVEASKTESEI) show a composition bias toward basic and acidic residues. The residue at position 290 (Ser-290) is a Phosphoserine. The Protein kinase domain occupies 1266-1558 (WQKRNFIGGG…AVELLMDPWI (293 aa)). ATP is bound by residues 1272–1280 (IGGGTFGRV) and Lys-1295. Asp-1390 functions as the Proton acceptor in the catalytic mechanism. Ser-1424 carries the phosphoserine modification.

The protein belongs to the protein kinase superfamily. STE Ser/Thr protein kinase family. MAP kinase kinase kinase subfamily. As to quaternary structure, interacts with by SSK1.

It catalyses the reaction L-seryl-[protein] + ATP = O-phospho-L-seryl-[protein] + ADP + H(+). The catalysed reaction is L-threonyl-[protein] + ATP = O-phospho-L-threonyl-[protein] + ADP + H(+). Kinase involved in a signal transduction pathway that is activated by changes in the osmolarity of the extracellular environment. Activates the PBS2 MAP kinase kinase by phosphorylation. This Saccharomyces cerevisiae (strain ATCC 204508 / S288c) (Baker's yeast) protein is MAP kinase kinase kinase SSK2 (SSK2).